The chain runs to 207 residues: 2,3-bisphosphoglycerate-dependent phosphoglycerate mutase (207 aa).

Substrate-binding positions include 10 to 17, 23 to 24, arginine 62, 89 to 92, lysine 100, 116 to 117, and 160 to 161; these read RHGQSEWN, TG, ERDY, RR, and GN. The Tele-phosphohistidine intermediate role is filled by histidine 11. The Proton donor/acceptor role is filled by glutamate 89.

Belongs to the phosphoglycerate mutase family. BPG-dependent PGAM subfamily. Homodimer.

It catalyses the reaction (2R)-2-phosphoglycerate = (2R)-3-phosphoglycerate. Its pathway is carbohydrate degradation; glycolysis; pyruvate from D-glyceraldehyde 3-phosphate: step 3/5. Functionally, catalyzes the interconversion of 2-phosphoglycerate and 3-phosphoglycerate. This is 2,3-bisphosphoglycerate-dependent phosphoglycerate mutase from Nitrobacter winogradskyi (strain ATCC 25391 / DSM 10237 / CIP 104748 / NCIMB 11846 / Nb-255).